Consider the following 213-residue polypeptide: Adenylate kinase (213 aa).

ATP is bound at residue 10 to 15; the sequence is GSGKGT. Residues 30 to 59 form an NMP region; that stretch reads SVGDLLRNIISSESKLGKGIKDTVESGNLI. AMP-binding positions include arginine 36, 57–59, 83–86, and glutamine 90; these read NLI and GFPR. The LID stretch occupies residues 125-160; the sequence is DRLTCLDCKSIYSISSFKNTTCAKCKSTRLEKRIDD. Position 126 (arginine 126) interacts with ATP. Residues cysteine 129 and cysteine 132 each contribute to the Zn(2+) site. Residue 135–136 coordinates ATP; that stretch reads IY. The Zn(2+) site is built by cysteine 146 and cysteine 149. AMP contacts are provided by arginine 157 and arginine 169. Position 195 (leucine 195) interacts with ATP.

It belongs to the adenylate kinase family. Monomer.

The protein localises to the cytoplasm. The catalysed reaction is AMP + ATP = 2 ADP. The protein operates within purine metabolism; AMP biosynthesis via salvage pathway; AMP from ADP: step 1/1. In terms of biological role, catalyzes the reversible transfer of the terminal phosphate group between ATP and AMP. Plays an important role in cellular energy homeostasis and in adenine nucleotide metabolism. This is Adenylate kinase from Wolbachia pipientis subsp. Culex pipiens (strain wPip).